A 73-amino-acid polypeptide reads, in one-letter code: Waprin-Phi2 (73 aa).

The signal sequence occupies residues 1-21 (MKATLLLLLLFAVILPGTISA). The WAP domain occupies 22–72 (EQEKPGSCPNVDMPIPPLGLCKTTCSKDSDCSETKKCCKNGCGFMTCTTAR). Intrachain disulfides connect C29–C59, C42–C63, C46–C58, and C52–C68.

The protein belongs to the venom waprin family. Expressed by the venom gland.

Its subcellular location is the secreted. Damages membranes of susceptible bacteria. Has no hemolytic activity. Not toxic to mice. Does not inhibit the proteinases elastase and cathepsin G. The chain is Waprin-Phi2 from Philodryas olfersii (Green snake).